The sequence spans 347 residues: NADH-ubiquinone oxidoreductase chain 2 (347 aa).

A run of 10 helical transmembrane segments spans residues 1–21, 25–45, 67–87, 111–131, 144–164, 178–198, 201–221, 237–257, 274–294, and 326–346; these read MNPL…LIVM, HWFM…PLLT, SMLL…WSIM, FHFW…LILL, MIMP…SIAI, IMAY…AYNP, TLLN…LLMI, LPLI…LPPL, SSII…YFYT, and LPLM…MPIL.

It belongs to the complex I subunit 2 family. In terms of assembly, core subunit of respiratory chain NADH dehydrogenase (Complex I) which is composed of 45 different subunits. Interacts with TMEM242.

Its subcellular location is the mitochondrion inner membrane. The enzyme catalyses a ubiquinone + NADH + 5 H(+)(in) = a ubiquinol + NAD(+) + 4 H(+)(out). Core subunit of the mitochondrial membrane respiratory chain NADH dehydrogenase (Complex I) which catalyzes electron transfer from NADH through the respiratory chain, using ubiquinone as an electron acceptor. Essential for the catalytic activity and assembly of complex I. This is NADH-ubiquinone oxidoreductase chain 2 from Myotis simus (Velvety myotis).